Reading from the N-terminus, the 910-residue chain is Staphylococcal nuclease domain-containing protein 1 (910 aa).

Alanine 2 bears the N-acetylalanine mark. 3 consecutive TNase-like domains span residues 18–166, 193–328, and 341–496; these read TVQR…MWSE, KPVN…IWRD, and KQFV…LHSK. Threonine 103 bears the Phosphothreonine mark. Lysine 193 carries the N6-acetyllysine modification. Threonine 240 bears the Phosphothreonine mark. Short sequence motifs (nuclear localization signal) lie at residues 321–325 and 388–392; these read RRLRI and KKLRP. Residue serine 426 is modified to Phosphoserine. Lysine 513 is covalently cross-linked (Glycyl lysine isopeptide (Lys-Gly) (interchain with G-Cter in SUMO2)). The TNase-like 4 domain maps to 525–660; sequence GRSEAVVEYV…KQKKEKVWAH (136 aa). Residue lysine 641 is modified to N6-acetyllysine. Serine 645 is subject to Phosphoserine. A Tudor domain is found at 729 to 787; it reads APRRGEFCIAKFVDGEWYRARVEKVESPAKVHVFYIDYGNREILPSTRLGTLPPAFSTR. A Phosphothreonine modification is found at threonine 779. Serine 785 and serine 909 each carry phosphoserine.

As to quaternary structure, forms a ternary complex with STAT6 and POLR2A. Associates with the RNA-induced silencing complex (RISC). Interacts with the RISC components AGO2, FMR1 and TNRC6A. Interacts with GTF2E1 and GTF2E2. Interacts with PIM1. Interacts with STAT5. Interacts with SYT11 (via C2 2 domain); the interaction with SYT11 is direct. Phosphorylated by PIM1 in vitro. In lactating cows highly expressed in mammary epithelial cells.

The protein localises to the cytoplasm. Its subcellular location is the nucleus. The protein resides in the melanosome. The enzyme catalyses Endonucleolytic cleavage to nucleoside 3'-phosphates and 3'-phosphooligonucleotide end-products.. Its function is as follows. Endonuclease that mediates miRNA decay of both protein-free and AGO2-loaded miRNAs. As part of its function in miRNA decay, regulates mRNAs involved in G1-to-S phase transition. Functions as a bridging factor between STAT6 and the basal transcription factor. Plays a role in PIM1 regulation of MYB activity. Functions as a transcriptional coactivator for STAT5. The protein is Staphylococcal nuclease domain-containing protein 1 (SND1) of Bos taurus (Bovine).